A 151-amino-acid polypeptide reads, in one-letter code: uncharacterized protein (151 aa).

This is an uncharacterized protein from Rhodobacter capsulatus (Rhodopseudomonas capsulata).